The following is a 572-amino-acid chain: Light-independent protochlorophyllide reductase subunit N (572 aa).

[4Fe-4S] cluster-binding residues include Cys106, Cys131, and Cys191. Residues Ser249–Asn268 form a disordered region.

This sequence belongs to the BchN/ChlN family. In terms of assembly, protochlorophyllide reductase is composed of three subunits; ChlL, ChlN and ChlB. Forms a heterotetramer of two ChlB and two ChlN subunits. [4Fe-4S] cluster is required as a cofactor.

It localises to the plastid. The protein localises to the chloroplast. The enzyme catalyses chlorophyllide a + oxidized 2[4Fe-4S]-[ferredoxin] + 2 ADP + 2 phosphate = protochlorophyllide a + reduced 2[4Fe-4S]-[ferredoxin] + 2 ATP + 2 H2O. Its pathway is porphyrin-containing compound metabolism; chlorophyll biosynthesis (light-independent). Component of the dark-operative protochlorophyllide reductase (DPOR) that uses Mg-ATP and reduced ferredoxin to reduce ring D of protochlorophyllide (Pchlide) to form chlorophyllide a (Chlide). This reaction is light-independent. The NB-protein (ChlN-ChlB) is the catalytic component of the complex. This Oltmannsiellopsis viridis (Marine flagellate) protein is Light-independent protochlorophyllide reductase subunit N.